The following is a 331-amino-acid chain: Isopenicillin N synthase (331 aa).

Isopenicillin N-binding residues include arginine 87, tyrosine 91, serine 183, and tyrosine 189. N-[(5S)-5-amino-5-carboxypentanoyl]-L-cysteinyl-D-valine-binding residues include arginine 87, tyrosine 91, serine 183, tyrosine 189, histidine 214, and aspartate 216. In terms of domain architecture, Fe2OG dioxygenase spans 181–288 (LSSVVLIRYP…RQSLPFFVNL (108 aa)). Fe(2+)-binding residues include histidine 214, aspartate 216, and histidine 270. Arginine 279 is a 2-oxoglutarate binding site. Serine 281 lines the isopenicillin N pocket. Serine 281 is a binding site for N-[(5S)-5-amino-5-carboxypentanoyl]-L-cysteinyl-D-valine.

Belongs to the iron/ascorbate-dependent oxidoreductase family. It depends on Fe(2+) as a cofactor.

It is found in the cytoplasm. It localises to the cytosol. The enzyme catalyses N-[(5S)-5-amino-5-carboxypentanoyl]-L-cysteinyl-D-valine + O2 = isopenicillin N + 2 H2O. The protein operates within antibiotic biosynthesis; penicillin G biosynthesis; penicillin G from L-alpha-aminoadipate and L-cysteine and L-valine: step 2/3. Its function is as follows. Isopenicillin N synthase; part of the gene cluster that mediates the biosynthesis of penicillin, the world's most important antibiotic. The first step of the pathway is performed by the trimodular NRPS acvA that produces the tripeptide N-[(5S)-5-amino-5-carboxypentanoyl]-L-cysteinyl-D-valine (LLD-ACV or ACV) via condensation of the 3 residues L-2-aminoadipate, L-cysteine and L-valine. The precursor amino acids for penicillin biosynthesis are withdrawn from the vacuolar amino acid pool by the MFS-type transporter penV. Each of the constituent amino acids of the tripeptide acv are activated as aminoacyl-adenylates with peptide bonds formed through the participation of amino acid thioester intermediates. The tripeptide ACV is then cyclized to form isopenicillin N (IPN) by the isopenicillin N synthase ipnA that forms the beta-lactam nucleus. Finally, the alpha-aminoadipyl side chain is exchanged for phenylacetic acid by the isopenicillin N acyltransferase aatA to yield penicillin. This step occurs in the peroxisomal matrix and the penM and paaT transporters are involved in the isopenicillin N and phenylacetic acid import into the peroxisome, respectively. This chain is Isopenicillin N synthase, found in Penicillium rubens (strain ATCC 28089 / DSM 1075 / NRRL 1951 / Wisconsin 54-1255) (Penicillium chrysogenum).